Here is a 122-residue protein sequence, read N- to C-terminus: Large ribosomal subunit protein uL14 (122 aa).

This sequence belongs to the universal ribosomal protein uL14 family. In terms of assembly, part of the 50S ribosomal subunit. Forms a cluster with proteins L3 and L19. In the 70S ribosome, L14 and L19 interact and together make contacts with the 16S rRNA in bridges B5 and B8.

Functionally, binds to 23S rRNA. Forms part of two intersubunit bridges in the 70S ribosome. The chain is Large ribosomal subunit protein uL14 from Sinorhizobium fredii (strain NBRC 101917 / NGR234).